We begin with the raw amino-acid sequence, 723 residues long: ESX-1 secretion-associated protein EspK (723 aa).

Disordered regions lie at residues 175 to 360 (DLLQ…TPAA) and 393 to 451 (SGAG…GTPV). A compositionally biased stretch (low complexity) spans 200–209 (TPGTPITPGT). The segment covering 210–229 (PITPIPGAPVTPITPTPGTP) has biased composition (pro residues). Positions 230 to 249 (VTPVTPGKPVTPVTPVKPGT) are enriched in low complexity. Composition is skewed to pro residues over residues 250-265 (PGEPTPITPVTPPVAP) and 274-308 (PVTPAPAPHPQPAPAPAPSPGPQPVTPATPGPSGP). Composition is skewed to low complexity over residues 309–319 (ATPGTPGGEPA), 393–404 (SGAGSHAATGRA), and 412–426 (AAAPSTRAASARTAP). A compositionally biased stretch (basic and acidic residues) spans 432-444 (STDHIDKPDRSES).

Its subcellular location is the cytoplasm. Functionally, may act as a chaperone that facilitates EspB secretion through an interaction with EccCb1. This chain is ESX-1 secretion-associated protein EspK, found in Mycobacterium tuberculosis (strain CDC 1551 / Oshkosh).